The primary structure comprises 462 residues: L-seryl-tRNA(Sec) selenium transferase (462 aa).

An N6-(pyridoxal phosphate)lysine modification is found at Lys-293.

The protein belongs to the SelA family. The cofactor is pyridoxal 5'-phosphate.

The protein resides in the cytoplasm. The enzyme catalyses L-seryl-tRNA(Sec) + selenophosphate + H(+) = L-selenocysteinyl-tRNA(Sec) + phosphate. Its pathway is aminoacyl-tRNA biosynthesis; selenocysteinyl-tRNA(Sec) biosynthesis; selenocysteinyl-tRNA(Sec) from L-seryl-tRNA(Sec) (bacterial route): step 1/1. In terms of biological role, converts seryl-tRNA(Sec) to selenocysteinyl-tRNA(Sec) required for selenoprotein biosynthesis. The protein is L-seryl-tRNA(Sec) selenium transferase of Clostridium botulinum (strain Okra / Type B1).